We begin with the raw amino-acid sequence, 408 residues long: Glutathione-independent formaldehyde dehydrogenase (408 aa).

Position 61 (Cys-61) interacts with Zn(2+). Positions 62, 63, and 66 each coordinate NAD(+). Residues His-82, Cys-112, Cys-115, Cys-118, Cys-126, and Asp-184 each coordinate Zn(2+). 9 residues coordinate NAD(+): Val-212, Asp-232, Arg-237, Val-277, His-284, Pro-311, Leu-313, Gly-348, and Thr-350.

Belongs to the zinc-containing alcohol dehydrogenase family. The cofactor is Zn(2+).

The catalysed reaction is formaldehyde + NAD(+) + H2O = formate + NADH + 2 H(+). Its activity is regulated as follows. Activity is not inhibited by EDTA, which is probably not sufficient to displace the bound metal. Dehydrogenase that catalyzes the NAD(+)-dependent oxidation of formaldehyde. Exhibits lower activity with acetaldehyde (about 10-fold lower than for formaldehyde), but cannot use methanol, ethanol, 1-butanol, glyoxal or formic acid. Is involved in formaldehyde detoxification. The chain is Glutathione-independent formaldehyde dehydrogenase from Bacillus subtilis (strain 168).